Reading from the N-terminus, the 150-residue chain is 3-dehydroquinate dehydratase (150 aa).

The Proton acceptor role is filled by Tyr-26. Asn-77, His-83, and Asp-90 together coordinate substrate. The active-site Proton donor is the His-103. Residues 104-105 and Arg-114 each bind substrate; that span reads LS.

It belongs to the type-II 3-dehydroquinase family. Homododecamer.

The catalysed reaction is 3-dehydroquinate = 3-dehydroshikimate + H2O. It participates in metabolic intermediate biosynthesis; chorismate biosynthesis; chorismate from D-erythrose 4-phosphate and phosphoenolpyruvate: step 3/7. Functionally, catalyzes a trans-dehydration via an enolate intermediate. The polypeptide is 3-dehydroquinate dehydratase (Citrobacter koseri (strain ATCC BAA-895 / CDC 4225-83 / SGSC4696)).